Consider the following 117-residue polypeptide: Probable non-functional immunoglobulin heavy variable 3-16 (117 aa).

Residues 1–19 form the signal peptide; sequence MEFGLSWVFLAGILKGVQC. A framework-1 region spans residues 20–44; it reads EVQLVESGGGLVQPGGSLRLSCAAS. In terms of domain architecture, Ig-like spans 21-117; it reads VQLVESGGGL…EDMAVYYCVR (97 aa). Cys41 and Cys115 are oxidised to a cystine. Residues 45 to 52 form a complementarity-determining-1 region; that stretch reads GFTFSNSD. The interval 53 to 69 is framework-2; sequence MNWARKAPGKGLEWVSG. Residues 70 to 77 are complementarity-determining-2; it reads VSWNGSRT. Residue Asn73 is glycosylated (N-linked (GlcNAc...) asparagine). The framework-3 stretch occupies residues 78–115; sequence HYVDSVKRRFIISRDNSRNSLYLQKNRRRAEDMAVYYC. Residues 116 to 117 form a complementarity-determining-3 region; sequence VR.

As to quaternary structure, immunoglobulins are composed of two identical heavy chains and two identical light chains; disulfide-linked.

The protein resides in the secreted. It localises to the cell membrane. Its function is as follows. Probable non-functional open reading frame (ORF) of V region of the variable domain of immunoglobulin heavy chains. Non-functional ORF generally cannot participate in the synthesis of a productive immunoglobulin chain due to altered V-(D)-J or switch recombination and/or splicing site (at mRNA level) and/or conserved amino acid change (protein level). Immunoglobulins, also known as antibodies, are membrane-bound or secreted glycoproteins produced by B lymphocytes. In the recognition phase of humoral immunity, the membrane-bound immunoglobulins serve as receptors which, upon binding of a specific antigen, trigger the clonal expansion and differentiation of B lymphocytes into immunoglobulins-secreting plasma cells. Secreted immunoglobulins mediate the effector phase of humoral immunity, which results in the elimination of bound antigens. The antigen binding site is formed by the variable domain of one heavy chain, together with that of its associated light chain. Thus, each immunoglobulin has two antigen binding sites with remarkable affinity for a particular antigen. The variable domains are assembled by a process called V-(D)-J rearrangement and can then be subjected to somatic hypermutations which, after exposure to antigen and selection, allow affinity maturation for a particular antigen. This Homo sapiens (Human) protein is Probable non-functional immunoglobulin heavy variable 3-16.